The following is a 479-amino-acid chain: NADH-quinone oxidoreductase subunit N (479 aa).

Transmembrane regions (helical) follow at residues 3–23 (MLYG…FQLI), 40–60 (IGFA…FNGI), 77–97 (IIIL…IKVA), 102–122 (HSEY…LVSA), 125–145 (FMVM…LTTF), 159–179 (YFIL…LVYG), 200–220 (MAVL…KLSI), 234–254 (APLV…LALL), 268–288 (FFYI…VGAF), 299–319 (FIAY…VANS), 327–347 (ISYF…AIII), 373–393 (SILI…AGFI), 409–429 (ELII…LNIV), and 452–472 (LVSI…MLFG).

It belongs to the complex I subunit 2 family. NDH-1 is composed of 14 different subunits. Subunits NuoA, H, J, K, L, M, N constitute the membrane sector of the complex.

The protein resides in the cell inner membrane. It catalyses the reaction a quinone + NADH + 5 H(+)(in) = a quinol + NAD(+) + 4 H(+)(out). Functionally, NDH-1 shuttles electrons from NADH, via FMN and iron-sulfur (Fe-S) centers, to quinones in the respiratory chain. The immediate electron acceptor for the enzyme in this species is believed to be ubiquinone. Couples the redox reaction to proton translocation (for every two electrons transferred, four hydrogen ions are translocated across the cytoplasmic membrane), and thus conserves the redox energy in a proton gradient. This chain is NADH-quinone oxidoreductase subunit N, found in Orientia tsutsugamushi (strain Ikeda) (Rickettsia tsutsugamushi).